Consider the following 639-residue polypeptide: Versicolorin B synthase stcN (639 aa).

The N-terminal stretch at 1 to 19 (MPAWSLLVLSALPVVGMFA) is a signal peptide. FAD-binding positions include 77–78 (TA) and 98–99 (EA). N-linked (GlcNAc...) asparagine glycosylation occurs at Asn-109. 164-167 (GAML) provides a ligand contact to FAD. An N-linked (GlcNAc...) asparagine glycan is attached at Asn-214. The PAS domain maps to 263-301 (GFSNGQLLGRSYITHTIHPKTRRRDTASTSYLQTALRTS). Asn-444 and Asn-501 each carry an N-linked (GlcNAc...) asparagine glycan. FAD-binding positions include Ala-609 and 620-621 (PM).

Belongs to the GMC oxidoreductase family. As to quaternary structure, homodimer. The cofactor is FAD.

The protein localises to the cytoplasm. Its subcellular location is the cytosol. The catalysed reaction is (2S-3S)-versiconal hemiacetal = versicolorin B + H2O. It catalyses the reaction (S)-5'-oxoaverantin + H(+) = (1'S,5'S)-averufin + H2O. Its pathway is mycotoxin biosynthesis; sterigmatocystin biosynthesis. Norsolorinic acid reductase; part of the gene cluster that mediates the biosynthesis of sterigmatocystin (ST), a polyketide-derived furanocoumarin which is part of the most toxic and carcinogenic compounds among the known mycotoxins. The first step in the biosynthesis of sterigmatocystin is the production of hexanoate by the fatty acid synthase (FAS) units stcJ and stcK. The polyketide backbone is assembled by the non-reducing polyketide synthase stcA by condensation of the starter hexanoyl-CoA and 7 malonyl-CoA extender units followed by cyclization and release of norsolorinic acid. Norsolorinic acid is the first stable intermediate in the biosynthesis of sterigmatocystin and is converted into averantin (AVN) by the ketoreductase stcE which reduces the hexanoate ketone to an alcohol. Averantin is then oxidized into 5'-hydroxyaverantin (HAVN) by the cytochrome P450 monooxygenase stcF. 5'-hydroxyaverantin is further converted to 5'-oxyaverantin (OAVN) by the 5'-hydroxyaverantin dehydrogenase stcG. The next step is the conversion of OAVN into averufin (AVF) which is catalyzed by a yet to be identified enzyme. The cytochrome P450 monooxygenase stcB and the flavin-binding monooxygenase stcW are both required for the conversion of averufin to 1-hydroxyversicolorone. The esterase stcI probably catalyzes the formation of versiconal hemiacetal acetate from 1-hydroxyversicolorone. The oxydoreductase stcN then probably catalyzes the biosynthetic step from versiconal to versicolorin B (VERB). The next step is performed by the versicolorin B desaturase stcL to produce versicolorin A (VERA). The ketoreductase stcU and the cytochrome P450 monooxygenase stcS are involved in the conversion of versicolorin A to demethylsterigmatocystin. The Baeyer-Villiger oxidas stcQ and the reductase stcR might be involved in the biosynthetic step from versicolorin A to demethylsterigmatocystin. The final step in the biosynthesis of sterigmatocystin is the methylation of demethylsterigmatocystin catalyzed by the methyltransferase stcP. The polypeptide is Versicolorin B synthase stcN (Emericella nidulans (strain FGSC A4 / ATCC 38163 / CBS 112.46 / NRRL 194 / M139) (Aspergillus nidulans)).